A 510-amino-acid chain; its full sequence is 2,3-bisphosphoglycerate-independent phosphoglycerate mutase (510 aa).

The Mn(2+) site is built by Asp-13 and Ser-63. Catalysis depends on Ser-63, which acts as the Phosphoserine intermediate. Substrate-binding positions include His-124, 154–155, Arg-186, Arg-192, 262–265, and Lys-334; these read RD and RADR. The Mn(2+) site is built by Asp-401, His-405, Asp-442, His-443, and His-461.

This sequence belongs to the BPG-independent phosphoglycerate mutase family. As to quaternary structure, monomer. Mn(2+) is required as a cofactor.

The enzyme catalyses (2R)-2-phosphoglycerate = (2R)-3-phosphoglycerate. It functions in the pathway carbohydrate degradation; glycolysis; pyruvate from D-glyceraldehyde 3-phosphate: step 3/5. Catalyzes the interconversion of 2-phosphoglycerate and 3-phosphoglycerate. This is 2,3-bisphosphoglycerate-independent phosphoglycerate mutase from Vibrio cholerae serotype O1 (strain ATCC 39541 / Classical Ogawa 395 / O395).